The following is a 238-amino-acid chain: Female-specific protein 800 (238 aa).

Residues 35–50 (YSYHHTYNNNNQGNYQ) are compositionally biased toward low complexity. Disordered regions lie at residues 35-112 (YSYH…KGGS) and 166-204 (NKRKITKSEKNGRYIKKDHMNNRDSNTNINEKPEYSKSP). A compositionally biased stretch (polar residues) spans 97-106 (RNDQIQSRGN). The span at 171–187 (TKSEKNGRYIKKDHMNN) shows a compositional bias: basic and acidic residues.

FS800 is likely to have some function in the production or maintenance of the schistosome egg. The polypeptide is Female-specific protein 800 (Schistosoma mansoni (Blood fluke)).